The sequence spans 715 residues: Ribosomal RNA large subunit methyltransferase K/L (715 aa).

In terms of domain architecture, THUMP spans 47 to 158 (LGYKISLWTR…RDNVTIFLDF (112 aa)).

This sequence belongs to the methyltransferase superfamily. RlmKL family.

The protein localises to the cytoplasm. It carries out the reaction guanosine(2445) in 23S rRNA + S-adenosyl-L-methionine = N(2)-methylguanosine(2445) in 23S rRNA + S-adenosyl-L-homocysteine + H(+). The enzyme catalyses guanosine(2069) in 23S rRNA + S-adenosyl-L-methionine = N(2)-methylguanosine(2069) in 23S rRNA + S-adenosyl-L-homocysteine + H(+). Functionally, specifically methylates the guanine in position 2445 (m2G2445) and the guanine in position 2069 (m7G2069) of 23S rRNA. The sequence is that of Ribosomal RNA large subunit methyltransferase K/L from Colwellia psychrerythraea (strain 34H / ATCC BAA-681) (Vibrio psychroerythus).